The sequence spans 508 residues: ATP synthase subunit alpha, mitochondrial (508 aa).

Position 171–178 (171–178 (GDRQTGKT)) interacts with ATP.

Belongs to the ATPase alpha/beta chains family. As to quaternary structure, F-type ATPases have 2 components, CF(1) - the catalytic core - and CF(0) - the membrane proton channel. CF(1) has five subunits: alpha(3), beta(3), gamma(1), delta(1), epsilon(1). CF(0) has three main subunits: a, b and c.

Its subcellular location is the mitochondrion. It is found in the mitochondrion inner membrane. Mitochondrial membrane ATP synthase (F(1)F(0) ATP synthase or Complex V) produces ATP from ADP in the presence of a proton gradient across the membrane which is generated by electron transport complexes of the respiratory chain. F-type ATPases consist of two structural domains, F(1) - containing the extramembraneous catalytic core, and F(0) - containing the membrane proton channel, linked together by a central stalk and a peripheral stalk. During catalysis, ATP synthesis in the catalytic domain of F(1) is coupled via a rotary mechanism of the central stalk subunits to proton translocation. Subunits alpha and beta form the catalytic core in F(1). Rotation of the central stalk against the surrounding alpha(3)beta(3) subunits leads to hydrolysis of ATP in three separate catalytic sites on the beta subunits. Subunit alpha does not bear the catalytic high-affinity ATP-binding sites. The polypeptide is ATP synthase subunit alpha, mitochondrial (ATPA) (Zea mays (Maize)).